The chain runs to 327 residues: Dipeptide transport ATP-binding protein DppF (327 aa).

Positions 12-261 (LNAIGLKKYY…PQHPYTKALL (250 aa)) constitute an ABC transporter domain. 54–61 (GESGCGKS) contacts ATP.

It belongs to the ABC transporter superfamily.

The protein localises to the cell inner membrane. It carries out the reaction a dipeptide(out) + ATP + H2O = a dipeptide(in) + ADP + phosphate + H(+). Part of the ABC transporter DppBCDF involved in dipeptide transport. Responsible for energy coupling to the transport system. In Haemophilus influenzae (strain ATCC 51907 / DSM 11121 / KW20 / Rd), this protein is Dipeptide transport ATP-binding protein DppF (dppF).